A 477-amino-acid polypeptide reads, in one-letter code: SH3 domain-binding protein 5 homolog (477 aa).

Positions Gln-12–Glu-95 form a coiled coil. Phosphoserine occurs at positions 113 and 115. Positions Asn-122–Arg-221 form a coiled coil. Disordered regions lie at residues Glu-224 to Ser-258 and Gly-276 to Ala-306. Residues Glu-291–Gly-305 show a composition bias toward acidic residues.

Belongs to the SH3BP5 family.

This is SH3 domain-binding protein 5 homolog (pcs) from Drosophila melanogaster (Fruit fly).